The chain runs to 458 residues: GTPase Der (458 aa).

2 consecutive EngA-type G domains span residues 9–171 and 197–368; these read KTIA…DLNQ and IQVG…ECFS. GTP-binding positions include 15–22, 62–66, 123–126, 203–210, 250–254, and 314–317; these read GQPNVGKS, DTGGM, NKID, GRVNVGKS, DTAGI, and NKWD. The 85-residue stretch at 369–453 folds into the KH-like domain; it reads KRIPTSLLNS…PLILNAKDKK (85 aa).

This sequence belongs to the TRAFAC class TrmE-Era-EngA-EngB-Septin-like GTPase superfamily. EngA (Der) GTPase family. As to quaternary structure, associates with the 50S ribosomal subunit.

Functionally, GTPase that plays an essential role in the late steps of ribosome biogenesis. This Helicobacter pylori (strain ATCC 700392 / 26695) (Campylobacter pylori) protein is GTPase Der.